The chain runs to 106 residues: Large ribosomal subunit protein eL42 (106 aa).

It belongs to the eukaryotic ribosomal protein eL42 family.

The chain is Large ribosomal subunit protein eL42 (RPL44) from Debaryomyces hansenii (strain ATCC 36239 / CBS 767 / BCRC 21394 / JCM 1990 / NBRC 0083 / IGC 2968) (Yeast).